We begin with the raw amino-acid sequence, 354 residues long: Polyribonucleotide 5'-hydroxyl-kinase PF0112 (354 aa).

Glycine 36–threonine 43 contacts ATP.

A divalent metal cation serves as cofactor.

The catalysed reaction is a 5'-end dephospho-2'-deoxyribonucleoside-DNA + ATP = a 5'-end 5'-phospho-2'-deoxyribonucleoside-DNA + ADP + H(+). It catalyses the reaction a 5'-end dephospho-ribonucleoside-RNA + ATP = a 5'-end 5'-phospho-ribonucleoside-RNA + ADP + H(+). Its function is as follows. Polynucleotide kinase that can phosphorylate the 5'-hydroxyl groups of both single-stranded RNA (ssRNA) and single-stranded DNA (ssDNA). Exhibits a strong preference for ssRNA. This is Polyribonucleotide 5'-hydroxyl-kinase PF0112 from Pyrococcus furiosus (strain ATCC 43587 / DSM 3638 / JCM 8422 / Vc1).